The primary structure comprises 468 residues: Putative magnesium transporter MRS2-G (468 aa).

Disordered regions lie at residues 1–76 (MGRR…AGKV) and 183–204 (GQPG…QVPR). Low complexity-rich tracts occupy residues 14–23 (ASNASTSSST) and 31–45 (RLPS…SSPS). A compositionally biased stretch (pro residues) spans 46 to 67 (PASPSPPPPSASHPAPPSPPLA). Basic and acidic residues predominate over residues 187–201 (GDDHGEKHDDSHGDQ). The next 2 membrane-spanning stretches (helical) occupy residues 402-422 (LTLT…GAFA) and 437-457 (FFWP…IVLL).

The protein belongs to the CorA metal ion transporter (MIT) (TC 1.A.35.5) family. Interacts with CYCB2-2.

The protein resides in the membrane. In terms of biological role, putative magnesium transporter. The polypeptide is Putative magnesium transporter MRS2-G (MRS2-G) (Oryza sativa subsp. japonica (Rice)).